A 744-amino-acid polypeptide reads, in one-letter code: Cell surface receptor daf-4 (744 aa).

Positions Met-1–Thr-31 are cleaved as a signal peptide. The Extracellular segment spans residues Trp-48–Gly-253. N-linked (GlcNAc...) asparagine glycans are attached at residues Asn-60, Asn-134, and Asn-165. A helical membrane pass occupies residues Trp-254 to Met-274. The Cytoplasmic segment spans residues Glu-275–Thr-744. The Protein kinase domain occupies Ile-306–Ser-603. ATP-binding positions include Ile-312–Val-320 and Lys-338. Asp-440 functions as the Proton acceptor in the catalytic mechanism. Disordered regions lie at residues Pro-605–Glu-686 and Ala-724–Thr-744. Basic and acidic residues predominate over residues Arg-620–His-639. Residues Ser-731–Thr-744 are compositionally biased toward low complexity.

It belongs to the protein kinase superfamily. TKL Ser/Thr protein kinase family. TGFB receptor subfamily. May interact with daf-1 to regulate dauer larva development. Interacts with sma-10. As to expression, pharynx, intestine, hypodermis and body wall muscles in L1 through to adult stages. Also expressed in head neurons, ventral cord and tail neurons. Subset of head neurons show coexpression with daf-1 when dauer/nondauer decision is made.

It localises to the cell membrane. It catalyses the reaction L-threonyl-[receptor-protein] + ATP = O-phospho-L-threonyl-[receptor-protein] + ADP + H(+). It carries out the reaction L-seryl-[receptor-protein] + ATP = O-phospho-L-seryl-[receptor-protein] + ADP + H(+). In terms of biological role, involved in a TGF-beta pathway. May be a receptor for TGF-beta-like ligand daf-7. Controls the decision of whether or not larvae enter a developmentally arrested state, known as dauer, in response to environmental conditions. Regulates body size and male tail patterning. Involved in regulating entry into quiescence triggered by satiety. Involved in sensitivity to CO2 levels. The chain is Cell surface receptor daf-4 from Caenorhabditis elegans.